A 233-amino-acid chain; its full sequence is Antiholin-like protein LrgB (233 aa).

7 helical membrane-spanning segments follow: residues 9 to 29 (TPYFGILLSVIPFFLATILFE), 34 to 54 (FFLFAPLFVSMVFGVAFLYLT), 63 to 83 (IGGDIIYFFLEPATICFAIPL), 97 to 117 (IIGGIGIGTVVALLIILTFAK), 121 to 141 (FANDVILSMLPQAATTAIALP), 144 to 164 (AGIGGIKELTSLAVILNGVII), and 212 to 232 (IALVLVGVVVVAVVPVFVAIF).

This sequence belongs to the CidB/LrgB family. LrgB subfamily.

The protein resides in the cell membrane. Its function is as follows. Inhibits the expression or activity of extracellular murein hydrolases by interacting, possibly with LrgA, with the holin-like proteins CidA and/or CidB. The LrgAB and CidAB proteins may affect the proton motive force of the membrane. May be involved in programmed cell death (PCD), possibly triggering PCD in response to antibiotics and environmental stresses. In Staphylococcus aureus (strain Mu3 / ATCC 700698), this protein is Antiholin-like protein LrgB.